The sequence spans 542 residues: Homeobox and leucine zipper protein Homez (542 aa).

The homeobox 1 DNA-binding region spans 55-114 (WTQAIQTSELDGNEHLLQAFSYFPYPSLADIALLCLRHGLQMEKVKTWFMAQRLRCGISW). The disordered stretch occupies residues 165–193 (LSPLAPSEQPTHMKGLKVEPEEPSQVSQL). Residues K181 and K201 each participate in a glycyl lysine isopeptide (Lys-Gly) (interchain with G-Cter in SUMO2) cross-link. The segment at 250 to 307 (VHQPDKPASVSLLDNSCKEESEPSGIPPSSSTSSPSFQALANGTTATPKPLQPLGCIS) is disordered. Over residues 272–285 (PSGIPPSSSTSSPS) the composition is skewed to low complexity. Positions 286-296 (FQALANGTTAT) are enriched in polar residues. At S345 the chain carries Phosphoserine. 2 DNA-binding regions (homeobox) span residues 349–409 (QHQR…KHGQ) and 443–502 (TPPL…AEVV). The Nuclear localization signal motif lies at 352 to 357 (RKTKRK). Disordered regions lie at residues 424–454 (FQDP…PPPD) and 501–542 (VVVC…IIWD). Phosphothreonine is present on T443. Residues 444 to 454 (PPLPAPPPPPD) are compositionally biased toward pro residues. Residues 505-542 (LDEEDEEDEEDELPEDGEEEEEEEEDDDDGDDDVIIWD) are compositionally biased toward acidic residues.

As to quaternary structure, homodimer or heterodimer (Potential). Interacts with HOXC8. In terms of tissue distribution, ubiquitous. Strongly expressed in testis.

The protein localises to the nucleus. In terms of biological role, may function as a transcriptional regulator. The sequence is that of Homeobox and leucine zipper protein Homez (Homez) from Mus musculus (Mouse).